A 625-amino-acid polypeptide reads, in one-letter code: MDYNIFEAVHEQQSSTSDMDLSEEDNNPFVGTHHLYASGIGTTIGEARPENENSPPSSSSLPSSPAHSSSAGSSRASTSSSTSSHAVVEADAETEPFVSLSMSTTATISKFTPHDMNGTQQIQIIDAGDFKDPWGKHAIGYVILYENNKIIRRYSEFHSLRQSLTRLLPTIIIPPIPSKHSLLKYIWSPINAANDSKIISTRKKMLNSFLSNCLNIQEISNDIVFQKFLNPEFNWKDVLSSSPIIILPLNNLLAPPLSPTKPSPLHSILPIPSNSSLRNYNSIWQQHITVKSHNEISNLPTEILQNESQFTHIENLFQNYKRIITHLLKNIRSNKSHFHSLSTYFAELGAYYNAFSLENDITMPNSLRESENNSNNPMMEIISHIEKTGHSFDVIYISSEILIEKYTSILEDPINELLQFLNESFKVLNFKKLKFLQFKILERLIIEKETKLSSLTEIENQLQKINESLTRSTILTDENYKDTKAADLTFVKKDVRSLSKSSSNSSSSGHQNEIHIGASKLNYKTSTPTMNLNKLEIKQLTEQERSKQIKQLNQDLSKLKDCLSICISDMLEINNSSYNSLMHTYNHINLTIGKILKLFAASFKAWIKECLKNWKLAKLQIDEAL.

The tract at residues 1–90 is disordered; it reads MDYNIFEAVH…STSSHAVVEA (90 aa). Positions 54–86 are enriched in low complexity; sequence SPPSSSSLPSSPAHSSSAGSSRASTSSSTSSHA. One can recognise a PX domain in the interval 98–235; sequence VSLSMSTTAT…QKFLNPEFNW (138 aa). A 1,2-diacyl-sn-glycero-3-phospho-(1D-myo-inositol-3-phosphate) is bound by residues R153, S155, K179, and R202. Coiled coils occupy residues 437 to 469 and 539 to 563; these read QFKI…NESL and QLTE…KDCL.

Belongs to the sorting nexin family. In terms of assembly, binds to SNX4.

The protein localises to the prevacuolar compartment. Its subcellular location is the endosome. It is found in the endosome membrane. Its function is as follows. Involved in proper sorting of the v-SNARE protein SNC1. The sequence is that of Sorting nexin-41 (SNX41) from Saccharomyces cerevisiae (strain ATCC 204508 / S288c) (Baker's yeast).